The chain runs to 157 residues: Cyclic pyranopterin monophosphate synthase (157 aa).

Residues 74 to 76 and 112 to 113 each bind substrate; these read MCH and ME. Residue Asp127 is part of the active site.

This sequence belongs to the MoaC family. Homohexamer; trimer of dimers.

The catalysed reaction is (8S)-3',8-cyclo-7,8-dihydroguanosine 5'-triphosphate = cyclic pyranopterin phosphate + diphosphate. The protein operates within cofactor biosynthesis; molybdopterin biosynthesis. Functionally, catalyzes the conversion of (8S)-3',8-cyclo-7,8-dihydroguanosine 5'-triphosphate to cyclic pyranopterin monophosphate (cPMP). In Campylobacter jejuni (strain RM1221), this protein is Cyclic pyranopterin monophosphate synthase.